The chain runs to 256 residues: Hemolymph lipopolysaccharide-binding protein (256 aa).

The N-terminal stretch at 1–21 is a signal peptide; it reads MMNTRALLPLSVLLMATLCLC. Residues 22–33 constitute a propeptide that is removed on maturation; it reads ELPIPILQRFVR. Asn56 carries an N-linked (GlcNAc...) asparagine glycan. The C-type lectin domain occupies 146–256; that stretch reads IICQQEGGHL…KLPFVCEVEL (111 aa). Intrachain disulfides connect Cys148–Cys252 and Cys230–Cys244.

In terms of tissue distribution, hemolymph.

The protein localises to the secreted. Participates probably in the elimination of foreign substances invading the insect abdominal cavity, and in trapping intracellular symbionts, when they leak from the mycetomes into the hemolymph. This is Hemolymph lipopolysaccharide-binding protein from Periplaneta americana (American cockroach).